The following is an 85-amino-acid chain: RNA-binding protein Hfq (85 aa).

Residues 10 to 69 (DPFLNILRKEHVPVSIYLVNGIKLQGQIESFDQYVVLLKNTVTQMVYKHAISTVVPARPV) enclose the Sm domain.

The protein belongs to the Hfq family. As to quaternary structure, homohexamer.

Its function is as follows. RNA chaperone that binds small regulatory RNA (sRNAs) and mRNAs to facilitate mRNA translational regulation in response to envelope stress, environmental stress and changes in metabolite concentrations. Also binds with high specificity to tRNAs. This Laribacter hongkongensis (strain HLHK9) protein is RNA-binding protein Hfq.